The sequence spans 437 residues: Neomycin resistance protein (437 aa).

Disordered stretches follow at residues 161-285 (GQRG…EEEA) and 305-338 (VSGAGHRVDPLPAPAPGPDRRRHRGRRHGRPVPD). Residues 203–229 (PPTGARSPGATAGARATASTSSSSVRS) are compositionally biased toward low complexity. Residues 324 to 338 (RRRHRGRRHGRPVPD) show a composition bias toward basic residues.

It belongs to the Gram-positive plasmids replication protein type 1 family.

The sequence is that of Neomycin resistance protein from Streptomyces cyanogenus.